A 378-amino-acid chain; its full sequence is Chaperone protein DnaJ (378 aa).

In terms of domain architecture, J spans 5–70; that stretch reads DFYEILGVSK…EKRSAYDRMG (66 aa). The CR-type zinc finger occupies 137–215; that stretch reads GCKKEISFTA…CHGNGVKDKS (79 aa). 8 residues coordinate Zn(2+): Cys-150, Cys-153, Cys-167, Cys-170, Cys-189, Cys-192, Cys-203, and Cys-206. CXXCXGXG motif repeat units follow at residues 150-157, 167-174, 189-196, and 203-210; these read CDTCDGKG, CQTCHGQG, CPHCGGTG, and CSDCHGNG.

This sequence belongs to the DnaJ family. Homodimer. Requires Zn(2+) as cofactor.

The protein resides in the cytoplasm. Its function is as follows. Participates actively in the response to hyperosmotic and heat shock by preventing the aggregation of stress-denatured proteins and by disaggregating proteins, also in an autonomous, DnaK-independent fashion. Unfolded proteins bind initially to DnaJ; upon interaction with the DnaJ-bound protein, DnaK hydrolyzes its bound ATP, resulting in the formation of a stable complex. GrpE releases ADP from DnaK; ATP binding to DnaK triggers the release of the substrate protein, thus completing the reaction cycle. Several rounds of ATP-dependent interactions between DnaJ, DnaK and GrpE are required for fully efficient folding. Also involved, together with DnaK and GrpE, in the DNA replication of plasmids through activation of initiation proteins. This Psychrobacter cryohalolentis (strain ATCC BAA-1226 / DSM 17306 / VKM B-2378 / K5) protein is Chaperone protein DnaJ.